The following is a 356-amino-acid chain: Glutamine synthetase cytosolic isozyme 1-1 (356 aa).

Residues 19–99 enclose the GS beta-grasp domain; sequence IIAEYIWIGG…VMCDCYTPAG (81 aa). The 251-residue stretch at 106–356 folds into the GS catalytic domain; it reads KRHNAAKIFS…IAETTIIWKP (251 aa).

The protein belongs to the glutamine synthetase family. As to quaternary structure, homooctamer. As to expression, highly expressed in leaf blades, at intermediate levels in spikelets (rice flower) and at lower levels in roots.

It localises to the cytoplasm. The catalysed reaction is L-glutamate + NH4(+) + ATP = L-glutamine + ADP + phosphate + H(+). Functionally, high-affinity glutamine synthetase involved in ammonium assimilation. Seems to be a major component of the cytosolic glutamine synthetic pathway in leaf blades. Plays an important role in maintaining carbon and nitrogen metabolic balance during ammonium assimilation in shoots and roots, thus controlling plant growth and development. Plays an important role in maintaining broad range of metabolites and transcripts involved in the maintenance of plant metabolic homeostasis and development of plastid in roots. The polypeptide is Glutamine synthetase cytosolic isozyme 1-1 (Oryza sativa subsp. japonica (Rice)).